Here is a 759-residue protein sequence, read N- to C-terminus: Pseudocleavage protein nop-1 (759 aa).

Disordered stretches follow at residues 1–46 (MSAP…SSIF), 334–361 (KIFP…MDKK), 379–413 (LSVN…NLSQ), 440–495 (QSSR…KKER), and 732–759 (ESDG…GAKI). The span at 10–42 (DIHSDDRDHADHQTKKEKHWFEEKSEQNGENRR) shows a compositional bias: basic and acidic residues. Residues 448-465 (TGNSSISSGVGSIASGTS) show a composition bias toward low complexity. Residues 473-482 (GSRSGQSISR) are compositionally biased toward polar residues. The segment covering 485–495 (SRRDDEGKKER) has biased composition (basic and acidic residues). Residues 736–759 (PASSNDDFDTQSTASTSTVFGAKI) are compositionally biased toward polar residues.

The protein resides in the nucleus. The protein localises to the cytoplasm. It is found in the cell cortex. It localises to the cleavage furrow. Required for formation of the pseudocleavage furrow during the first cleavage of the embryo and also mediates aster-induced furrowing during cytokinesis. Promotes cortical recruitment of ani-1 and nmy-2 during pseudocleavage and cytokinesis and promotes the accumulation of actin at furrowing regions. Regulates establishment of embryonic cell polarity. The chain is Pseudocleavage protein nop-1 (nop-1) from Caenorhabditis elegans.